Here is a 655-residue protein sequence, read N- to C-terminus: Putative phagocytic receptor 1c (655 aa).

Residues 1–20 (MLNIIVVLLLLFFSNNVIDS) form the signal peptide. The segment covering 146-173 (SNSKSSEITSPPSSPSSSSSSSSSPSSS) has biased composition (low complexity). Residues 146-185 (SNSKSSEITSPPSSPSSSSSSSSSPSSSIEEEDDDDTEND) are disordered. A compositionally biased stretch (acidic residues) spans 174–183 (IEEEDDDDTE). A run of 9 helical transmembrane segments spans residues 300–320 (IDII…AIIL), 359–379 (FSII…LMVF), 387–407 (IATP…TGIF), 428–448 (SVIT…IGYF), 461–481 (IGTV…CSLL), 518–538 (MILG…FFLS), 550–570 (LSFA…NMII), 587–607 (LLGP…FGIT), and 619–639 (FMFS…IGFL).

This sequence belongs to the nonaspanin (TM9SF) (TC 9.A.2) family.

Its subcellular location is the membrane. The sequence is that of Putative phagocytic receptor 1c (phg1c) from Dictyostelium discoideum (Social amoeba).